Here is a 297-residue protein sequence, read N- to C-terminus: 4-hydroxy-tetrahydrodipicolinate synthase (297 aa).

Threonine 49 contributes to the pyruvate binding site. The active-site Proton donor/acceptor is the tyrosine 137. Residue lysine 166 is the Schiff-base intermediate with substrate of the active site. Residue isoleucine 208 participates in pyruvate binding.

The protein belongs to the DapA family. In terms of assembly, homotetramer; dimer of dimers.

The protein localises to the cytoplasm. It carries out the reaction L-aspartate 4-semialdehyde + pyruvate = (2S,4S)-4-hydroxy-2,3,4,5-tetrahydrodipicolinate + H2O + H(+). The protein operates within amino-acid biosynthesis; L-lysine biosynthesis via DAP pathway; (S)-tetrahydrodipicolinate from L-aspartate: step 3/4. In terms of biological role, catalyzes the condensation of (S)-aspartate-beta-semialdehyde [(S)-ASA] and pyruvate to 4-hydroxy-tetrahydrodipicolinate (HTPA). This chain is 4-hydroxy-tetrahydrodipicolinate synthase, found in Parabacteroides distasonis (strain ATCC 8503 / DSM 20701 / CIP 104284 / JCM 5825 / NCTC 11152).